The primary structure comprises 265 residues: Speedy protein E12 (265 aa).

Residues 1–80 (MGQILGKIMM…EPEKELAPEP (80 aa)) form a disordered region. Low complexity predominate over residues 13–23 (QPQPQEEQSPQ). Over residues 66–80 (DESDDEPEKELAPEP) the composition is skewed to acidic residues.

Belongs to the Speedy/Ringo family.

In Homo sapiens (Human), this protein is Speedy protein E12.